Here is a 466-residue protein sequence, read N- to C-terminus: RUS family member 1 (466 aa).

An N-acetylalanine modification is found at alanine 2. Residues 245–265 (LLMLPLVSDCPSLSLGCFVLL) traverse the membrane as a helical segment.

This sequence belongs to the RUS1 family.

It is found in the membrane. This is RUS family member 1 from Mus musculus (Mouse).